Consider the following 1059-residue polypeptide: MEPTVADVHLVPRTTKEVPALDAACCRAASIGVVATSLVVLTLGVLLAFLSTQGFHVDHTAELRGIRWTSSLRRETSDYHRTLTPTLEALLHFLLRPLQTLSLGLEEELLQRGIRARLREHGISLAAYGTIVSAELTGRHKGPLAERDFKSGRCPGNSFSCGNSQCVTKVNPECDDQEDCSDGSDEAHCECGLQPAWRMAGRIVGGMEASPGEFPWQASLRENKEHFCGAAIINARWLVSAAHCFNEFQDPTKWVAYVGATYLSGSEASTVRAQVVQIVKHPLYNADTADFDVAVLELTSPLPFGRHIQPVCLPAATHIFPPSKKCLISGWGYLKEDFLVKPEVLQKATVELLDQALCASLYGHSLTDRMVCAGYLDGKVDSCQGDSGGPLVCEEPSGRFFLAGIVSWGIGCAEARRPGVYARVTRLRDWILEATTKASMPLAPTMAPAPAAPSTAWPTSPESPVVSTPTKSMQALSTVPLDWVTVPKLQECGARPAMEKPTRVVGGFGAASGEVPWQVSLKEGSRHFCGATVVGDRWLLSAAHCFNHTKVEQVRAHLGTASLLGLGGSPVKIGLRRVVLHPLYNPGILDFDLAVLELASPLAFNKYIQPVCLPLAIQKFPVGRKCMISGWGNTQEGNATKPELLQKASVGIIDQKTCSVLYNFSLTDRMICAGFLEGKVDSCQGDSGGPLACEEAPGVFYLAGIVSWGIGCAQVKKPGVYTRITRLKGWILEIMSSQPLPMSPPSTTRMLATTSPRTTAGLTVPGATPSRPTPGAASRVTGQPANSTLSAVSTTARGQTPFPDAPEATTHTQLPDCGLAPAALTRIVGGSAAGRGEWPWQVSLWLRRREHRCGAVLVAERWLLSAAHCFDVYGDPKQWAAFLGTPFLSGAEGQLERVARIYKHPFYNLYTLDYDVALLELAGPVRRSRLVRPICLPEPAPRPPDGTRCVITGWGSVREGGSMARQLQKAAVRLLSEQTCRRFYPVQISSRMLCAGFPQGGVDSCSGDAGGPLACREPSGRWVLTGVTSWGYGCGRPHFPGVYTRVAAVRGWIGQHIQE.

Over 1 to 29 (MEPTVADVHLVPRTTKEVPALDAACCRAA) the chain is Cytoplasmic. Residues 30-50 (SIGVVATSLVVLTLGVLLAFL) traverse the membrane as a helical; Signal-anchor for type II membrane protein segment. Residues 51-1059 (STQGFHVDHT…RGWIGQHIQE (1009 aa)) lie on the Extracellular side of the membrane. Residues 153–190 (RCPGNSFSCGNSQCVTKVNPECDDQEDCSDGSDEAHCE) form the LDL-receptor class A domain. 4 disulfides stabilise this stretch: Cys-154–Cys-166, Cys-161–Cys-180, Cys-174–Cys-189, and Cys-228–Cys-244. Residues 203 to 436 (IVGGMEASPG…LRDWILEATT (234 aa)) enclose the Peptidase S1 1 domain. Residues His-243 and Asp-292 each act as charge relay system in the active site. Cystine bridges form between Cys-326–Cys-393, Cys-358–Cys-372, and Cys-383–Cys-412. Ser-387 (charge relay system) is an active-site residue. The interval 443–469 (APTMAPAPAAPSTAWPTSPESPVVSTP) is disordered. In terms of domain architecture, Peptidase S1 2 spans 504–736 (VVGGFGAASG…LKGWILEIMS (233 aa)). The cysteines at positions 529 and 545 are disulfide-linked. His-544 (charge relay system) is an active-site residue. Asn-547 carries N-linked (GlcNAc...) asparagine glycosylation. Asp-592 acts as the Charge relay system in catalysis. Intrachain disulfides connect Cys-626–Cys-693, Cys-658–Cys-672, and Cys-683–Cys-712. Asn-638 and Asn-663 each carry an N-linked (GlcNAc...) asparagine glycan. Ser-687 (charge relay system) is an active-site residue. Residues 758 to 814 (TTAGLTVPGATPSRPTPGAASRVTGQPANSTLSAVSTTARGQTPFPDAPEATTHTQL) are disordered. Over residues 780 to 798 (VTGQPANSTLSAVSTTARG) the composition is skewed to polar residues. Asn-786 carries N-linked (GlcNAc...) asparagine glycosylation. A Peptidase S1 3 domain is found at 827-1058 (IVGGSAAGRG…VRGWIGQHIQ (232 aa)). 4 cysteine pairs are disulfide-bonded: Cys-853–Cys-869, Cys-949–Cys-1015, Cys-980–Cys-994, and Cys-1005–Cys-1034.

It belongs to the peptidase S1 family. Post-translationally, proteolytically cleaved to generate 3 independent serine protease chains. The cleaved chains may remain attached to the membrane thanks to disulfide bonds. It is unclear whether cleavage always takes place. Expressed in fetal human tissues, such as kidney, liver, lung and brain, and in a variety of tumor cell lines. Weakly expressed in adult tissues including skeletal muscle, liver, placenta and heart.

The protein localises to the cell membrane. Inhibited by serine protease inhibitors PMSF and 4-(2-aminoethyl)benzenesulfonyl fluoride, but not by EDTA. Its function is as follows. Serase-1 and serase-2 are serine proteases that hydrolyze the peptides N-t-Boc-Gln-Ala-Arg-AMC and N-t-Boc-Gln-Gly-Arg-AMC. In contrast, N-t-Boc-Ala-Phe-Lys-AMC and N-t-Boc-Ala-Pro-Ala-AMC are not significantly hydrolyzed. The sequence is that of Transmembrane protease serine 9 (TMPRSS9) from Homo sapiens (Human).